Reading from the N-terminus, the 162-residue chain is Transcription elongation factor GreB (162 aa).

A coiled-coil region spans residues 52–73; it reads KKLLREIDRRVRYLRKRLEDVK.

It belongs to the GreA/GreB family. GreB subfamily.

Necessary for efficient RNA polymerase transcription elongation past template-encoded arresting sites. The arresting sites in DNA have the property of trapping a certain fraction of elongating RNA polymerases that pass through, resulting in locked ternary complexes. Cleavage of the nascent transcript by cleavage factors such as GreA or GreB allows the resumption of elongation from the new 3'terminus. GreB releases sequences of up to 9 nucleotides in length. In Pseudomonas putida (strain ATCC 47054 / DSM 6125 / CFBP 8728 / NCIMB 11950 / KT2440), this protein is Transcription elongation factor GreB.